Consider the following 157-residue polypeptide: Endoribonuclease YbeY (157 aa).

Zn(2+)-binding residues include His122, His126, and His132.

Belongs to the endoribonuclease YbeY family. Zn(2+) is required as a cofactor.

It localises to the cytoplasm. Functionally, single strand-specific metallo-endoribonuclease involved in late-stage 70S ribosome quality control and in maturation of the 3' terminus of the 16S rRNA. In Bacillus velezensis (strain DSM 23117 / BGSC 10A6 / LMG 26770 / FZB42) (Bacillus amyloliquefaciens subsp. plantarum), this protein is Endoribonuclease YbeY.